A 72-amino-acid polypeptide reads, in one-letter code: Translation initiation factor IF-1 (72 aa).

In terms of domain architecture, S1-like spans 1 to 72 (MSKQDVIEVE…TRGRIVYRYK (72 aa)).

Belongs to the IF-1 family. As to quaternary structure, component of the 30S ribosomal translation pre-initiation complex which assembles on the 30S ribosome in the order IF-2 and IF-3, IF-1 and N-formylmethionyl-tRNA(fMet); mRNA recruitment can occur at any time during PIC assembly.

It localises to the cytoplasm. Functionally, one of the essential components for the initiation of protein synthesis. Stabilizes the binding of IF-2 and IF-3 on the 30S subunit to which N-formylmethionyl-tRNA(fMet) subsequently binds. Helps modulate mRNA selection, yielding the 30S pre-initiation complex (PIC). Upon addition of the 50S ribosomal subunit IF-1, IF-2 and IF-3 are released leaving the mature 70S translation initiation complex. This chain is Translation initiation factor IF-1, found in Pelotomaculum thermopropionicum (strain DSM 13744 / JCM 10971 / SI).